We begin with the raw amino-acid sequence, 309 residues long: MEFKHISVLLEETIDSLNIKEDGVYVDCTLGGGGHSKEILKKLSHKGKLIGIDQDTSAIKAAKEKLKDYENIIYVHNNFYNIDSILEELDIDKVDGIIMDLGVSSYQLDEASRGFSYMKDAPLDMRMNREENLSAYGVINNYEEEELFKILKNYGEEKFSRKIARFIVEKRTENPIETTGELVEIIRKAIPAKFQREGHPAKRTFQAIRIEVNKELQILNKAIEDSVNRLNKDGRLSIITFHSLEDRIVKVKFKELEKPCTCPPSFPICVCGKEPQIKIITKKPIEPSKEEKEINSRSRSAKLRVCRKI.

Residues 33–35, D53, F79, D100, and Q107 each bind S-adenosyl-L-methionine; that span reads GGH.

Belongs to the methyltransferase superfamily. RsmH family.

The protein resides in the cytoplasm. It carries out the reaction cytidine(1402) in 16S rRNA + S-adenosyl-L-methionine = N(4)-methylcytidine(1402) in 16S rRNA + S-adenosyl-L-homocysteine + H(+). Specifically methylates the N4 position of cytidine in position 1402 (C1402) of 16S rRNA. The polypeptide is Ribosomal RNA small subunit methyltransferase H (Clostridium botulinum (strain Okra / Type B1)).